A 921-amino-acid polypeptide reads, in one-letter code: Isoleucine--tRNA ligase (921 aa).

Residues 57–67 (PYANGELHMGH) carry the 'HIGH' region motif. Glu552 serves as a coordination point for L-isoleucyl-5'-AMP. Residues 593–597 (KMSKS) carry the 'KMSKS' region motif. Lys596 contributes to the ATP binding site. The Zn(2+) site is built by Cys888, Cys891, Cys908, and Cys911.

It belongs to the class-I aminoacyl-tRNA synthetase family. IleS type 1 subfamily. As to quaternary structure, monomer. The cofactor is Zn(2+).

It localises to the cytoplasm. It carries out the reaction tRNA(Ile) + L-isoleucine + ATP = L-isoleucyl-tRNA(Ile) + AMP + diphosphate. Functionally, catalyzes the attachment of isoleucine to tRNA(Ile). As IleRS can inadvertently accommodate and process structurally similar amino acids such as valine, to avoid such errors it has two additional distinct tRNA(Ile)-dependent editing activities. One activity is designated as 'pretransfer' editing and involves the hydrolysis of activated Val-AMP. The other activity is designated 'posttransfer' editing and involves deacylation of mischarged Val-tRNA(Ile). In Listeria monocytogenes serovar 1/2a (strain ATCC BAA-679 / EGD-e), this protein is Isoleucine--tRNA ligase.